The following is a 413-amino-acid chain: MGSSEPLPIVDSDKRRKKKRKTRATDSLPGKFEDVYQLTSELLGEGAYAKVQGAVSLQSGKEYAVKIIEKQAGHSRSRVFREVETLYQCQGNRNILELIEFFEDDTRFYLVFEKLQGGSILAHIQKRKHFNELEASRVVRDVATALDFLHTKGIAHRDLKPENILCESPEKVSPVKICDFDLGSGVKLNNSCTPITTPELTTPCGSAEYMAPEVVEVFRDEATFYDKRCDLWSLGVVLYIMLSGYPPFVGHCGADCGWDRGEVCRMCQNKLFESIQEGKYEFPDKDWAHISTEAKDLISKLLVRDAKQRLSAAQVLQHPWVQGQAPERGLPTPQVLQRNSSTMDLTLFAAEAIALNRQLSQHEENELAEEHEALAEGLCSMKLSPPSKSRLARRRALAHAGREANSCSTPAGL.

Residues 1 to 26 (MGSSEPLPIVDSDKRRKKKRKTRATD) are disordered. Thr-22 bears the Phosphothreonine; by PAK2 mark. At Ser-27 the chain carries Phosphoserine; by PAK2. The Protein kinase domain occupies 37-321 (QLTSELLGEG…AAQVLQHPWV (285 aa)). ATP is bound by residues 43-51 (LGEGAYAKV) and Lys-66. Residue Asp-158 is the Proton acceptor of the active site. A phosphoserine mark is found at Ser-168 and Ser-173. Residues Thr-197, Thr-202, and Thr-332 each carry the phosphothreonine modification.

Belongs to the protein kinase superfamily. CAMK Ser/Thr protein kinase family. In terms of assembly, interacts with the C-terminal regions of EIF4G1 and EIF4G2. Also binds to dephosphorylated ERK1 and ERK2, and to the p38 kinases. The cofactor is Mg(2+). In terms of processing, dual phosphorylation of Thr-197 and Thr-202 activates the kinase. Phosphorylation of Thr-332 activates the kinase. MAPK3/ERK1 is one of the kinases which activate MKNK1/MNK1. Phosphorylation by PAK2 leads to a reduced phosphorylation of EIF4G1.

The catalysed reaction is L-seryl-[protein] + ATP = O-phospho-L-seryl-[protein] + ADP + H(+). It carries out the reaction L-threonyl-[protein] + ATP = O-phospho-L-threonyl-[protein] + ADP + H(+). With respect to regulation, phosphorylated and activated by the p38 kinases and kinases in the Erk pathway. Functionally, may play a role in the response to environmental stress and cytokines. Appears to regulate translation by phosphorylating EIF4E, thus increasing the affinity of this protein for the 7-methylguanosine-containing mRNA cap. This Rattus norvegicus (Rat) protein is MAP kinase-interacting serine/threonine-protein kinase 1 (Mknk1).